The following is a 158-amino-acid chain: RNA pyrophosphohydrolase (158 aa).

Residues 9–151 (PLRNGVGIVV…KLHVYKDVKE (143 aa)) form the Nudix hydrolase domain. Residues 43-64 (GGVDKGEDYLTAAYRELEEETS) carry the Nudix box motif.

This sequence belongs to the Nudix hydrolase family. RppH subfamily. Requires a divalent metal cation as cofactor.

In terms of biological role, accelerates the degradation of transcripts by removing pyrophosphate from the 5'-end of triphosphorylated RNA, leading to a more labile monophosphorylated state that can stimulate subsequent ribonuclease cleavage. The chain is RNA pyrophosphohydrolase from Pelagibacter ubique (strain HTCC1062).